A 484-amino-acid chain; its full sequence is Glutamate mutase epsilon subunit (484 aa).

Arg66 serves as a coordination point for L-glutamate. Gly68 provides a ligand contact to adenosylcob(III)alamin. Residue Arg100 participates in L-glutamate binding. Asn123 lines the adenosylcob(III)alamin pocket. L-glutamate contacts are provided by residues 149 to 150 (RH), Glu171, and Tyr177. Pro180 serves as a coordination point for adenosylcob(III)alamin. Position 181 (Tyr181) interacts with L-glutamate. Phe297, Lys326, Glu330, and Ile334 together coordinate adenosylcob(III)alamin.

Belongs to the methylaspartate mutase GlmE subunit family. In terms of assembly, heterotetramer composed of 2 epsilon subunits (GlmE) and 2 sigma subunits (GlmS). GlmE exists as a homodimer and GlmS as a monomer. It depends on adenosylcob(III)alamin as a cofactor.

It carries out the reaction (2S,3S)-3-methyl-L-aspartate = L-glutamate. The protein operates within amino-acid degradation; L-glutamate degradation via mesaconate pathway; acetate and pyruvate from L-glutamate: step 1/4. Its function is as follows. Catalyzes the carbon skeleton rearrangement of L-glutamate to L-threo-3-methylaspartate ((2S,3S)-3-methylaspartate). The chain is Glutamate mutase epsilon subunit from Desulfitobacterium hafniense (strain Y51).